The primary structure comprises 235 residues: Large ribosomal subunit protein uL1 (235 aa).

This sequence belongs to the universal ribosomal protein uL1 family. Part of the 50S ribosomal subunit.

In terms of biological role, binds directly to 23S rRNA. The L1 stalk is quite mobile in the ribosome, and is involved in E site tRNA release. Protein L1 is also a translational repressor protein, it controls the translation of the L11 operon by binding to its mRNA. This is Large ribosomal subunit protein uL1 from Pseudarthrobacter chlorophenolicus (strain ATCC 700700 / DSM 12829 / CIP 107037 / JCM 12360 / KCTC 9906 / NCIMB 13794 / A6) (Arthrobacter chlorophenolicus).